A 360-amino-acid chain; its full sequence is UDP-N-acetylglucosamine--N-acetylmuramyl-(pentapeptide) pyrophosphoryl-undecaprenol N-acetylglucosamine transferase (360 aa).

Residues 13–15 (TGG), arginine 164, serine 192, and glutamine 293 each bind UDP-N-acetyl-alpha-D-glucosamine.

It belongs to the glycosyltransferase 28 family. MurG subfamily.

It localises to the cell inner membrane. The catalysed reaction is di-trans,octa-cis-undecaprenyl diphospho-N-acetyl-alpha-D-muramoyl-L-alanyl-D-glutamyl-meso-2,6-diaminopimeloyl-D-alanyl-D-alanine + UDP-N-acetyl-alpha-D-glucosamine = di-trans,octa-cis-undecaprenyl diphospho-[N-acetyl-alpha-D-glucosaminyl-(1-&gt;4)]-N-acetyl-alpha-D-muramoyl-L-alanyl-D-glutamyl-meso-2,6-diaminopimeloyl-D-alanyl-D-alanine + UDP + H(+). Its pathway is cell wall biogenesis; peptidoglycan biosynthesis. Functionally, cell wall formation. Catalyzes the transfer of a GlcNAc subunit on undecaprenyl-pyrophosphoryl-MurNAc-pentapeptide (lipid intermediate I) to form undecaprenyl-pyrophosphoryl-MurNAc-(pentapeptide)GlcNAc (lipid intermediate II). The chain is UDP-N-acetylglucosamine--N-acetylmuramyl-(pentapeptide) pyrophosphoryl-undecaprenol N-acetylglucosamine transferase from Chromobacterium violaceum (strain ATCC 12472 / DSM 30191 / JCM 1249 / CCUG 213 / NBRC 12614 / NCIMB 9131 / NCTC 9757 / MK).